Reading from the N-terminus, the 37-residue chain is Large ribosomal subunit protein bL36 (37 aa).

Belongs to the bacterial ribosomal protein bL36 family.

This Chromohalobacter salexigens (strain ATCC BAA-138 / DSM 3043 / CIP 106854 / NCIMB 13768 / 1H11) protein is Large ribosomal subunit protein bL36.